A 243-amino-acid polypeptide reads, in one-letter code: Probable transcriptional regulatory protein BDI_1233 (243 aa).

Belongs to the TACO1 family.

The protein resides in the cytoplasm. The protein is Probable transcriptional regulatory protein BDI_1233 of Parabacteroides distasonis (strain ATCC 8503 / DSM 20701 / CIP 104284 / JCM 5825 / NCTC 11152).